Here is a 265-residue protein sequence, read N- to C-terminus: Exosome complex component Rrp4 (265 aa).

In terms of domain architecture, S1 motif spans 65–137 (GDNVIGKIVD…EVNNIDLTTK (73 aa)). A KH domain is found at 147–205 (KGGQIVKITPSRVPRVIGRGGSMINMIKKLTMTRIIVGQNGWIWVSGKNDALEKLAIEA). The segment at 241 to 265 (EIPKLEEEPQGEDEVNGNDGEARGA) is disordered.

This sequence belongs to the RRP4 family. In terms of assembly, component of the archaeal exosome complex. Forms a trimer of Rrp4 and/or Csl4 subunits. The trimer associates with a hexameric ring-like arrangement composed of 3 Rrp41-Rrp42 heterodimers.

It localises to the cytoplasm. Its function is as follows. Non-catalytic component of the exosome, which is a complex involved in RNA degradation. Increases the RNA binding and the efficiency of RNA degradation. Confers strong poly(A) specificity to the exosome. The polypeptide is Exosome complex component Rrp4 (Pyrococcus abyssi (strain GE5 / Orsay)).